The following is a 1240-amino-acid chain: RNA2 polyprotein (1240 aa).

The span at 1193-1210 shows a compositional bias: polar residues; that stretch reads VGTTVPPTADASTSNSQG. The segment at 1193-1240 is disordered; that stretch reads VGTTVPPTADASTSNSQGGDEDIGDQYSAALGRGRGRGSRPGPSPIRG.

This sequence belongs to the nepoviruses RNA2 polyprotein family. Specific enzymatic cleavages in vivo by the P1 encoded 3C-like protease yield mature proteins.

Its subcellular location is the host cell junction. The protein localises to the host plasmodesma. It is found in the virion. Its function is as follows. Implicated in RNA2 replication. Could also be required for nematode transmission of the virus. Functionally, transports viral genome to neighboring plant cells directly through plasmosdesmata, without any budding. The movement protein allows efficient cell to cell propagation, by bypassing the host cell wall barrier. Acts by forming a tubular structure at the host plasmodesmata, enlarging it enough to allow free passage of virion capsids. The protein is RNA2 polyprotein of Cycas necrotic stunt virus (CNSV).